The following is a 597-amino-acid chain: Arginine--tRNA ligase (597 aa).

Positions 138-148 (ANPTGPMHVGH) match the 'HIGH' region motif.

It belongs to the class-I aminoacyl-tRNA synthetase family. In terms of assembly, monomer.

The protein resides in the cytoplasm. It carries out the reaction tRNA(Arg) + L-arginine + ATP = L-arginyl-tRNA(Arg) + AMP + diphosphate. The protein is Arginine--tRNA ligase of Rhodopseudomonas palustris (strain ATCC BAA-98 / CGA009).